A 458-amino-acid chain; its full sequence is MKPTETLQEKGKLFLVVMMPILITQIGLYAMNFFDTVMSGQAGANDLAGVAIGSSLWVPVFTGLNGVLLALTPIIAQSIGAEKRDDVPYVFLQGLYLSIAISIAVILIGAVVLDPILSAMSLEDEVGRIAKEYLIGLAFGIVPLFIYTTIRCLIDSLGETRVTMFITLLSLPINIFFNYVLIFGKLGFPRLGGVGAGYASAITYWFILAVAIVVVVKVRPFTDFQLFKKLYHVSLKKWKEILLLGLPIGFTIFFETSIFAAVTLLMSTFDTATIAAHQAAVNFASFLYMIPLSIAFTLTIAVGYEVGAKRVEDARQYSRLGITFALIMGLVAGVIIYVLRAPVASLYTNDSQVAWLIQQFLIYSIFFQLSDALATPIQGVLRGHKDVNVPFVMALVSFWIIGLPTGYLLANFSPLGPYGYWIGLITGLASCAIALSWRLKQMQRKFERAARLSQNGNS.

12 consecutive transmembrane segments (helical) span residues 14–34 (FLVVMMPILITQIGLYAMNFF), 56–76 (LWVPVFTGLNGVLLALTPIIA), 97–117 (LSIAISIAVILIGAVVLDPIL), 134–154 (LIGLAFGIVPLFIYTTIRCLI), 164–184 (MFITLLSLPINIFFNYVLIFG), 196–216 (AGYASAITYWFILAVAIVVVV), 241–261 (ILLLGLPIGFTIFFETSIFAA), 283–303 (FASFLYMIPLSIAFTLTIAVG), 320–340 (LGITFALIMGLVAGVIIYVLR), 353–373 (VAWLIQQFLIYSIFFQLSDAL), 389–409 (VPFVMALVSFWIIGLPTGYLL), and 415–435 (LGPYGYWIGLITGLASCAIAL).

Belongs to the multi antimicrobial extrusion (MATE) (TC 2.A.66.1) family.

The protein resides in the cell membrane. Multidrug efflux pump. This chain is Probable multidrug resistance protein NorM (norM), found in Halalkalibacterium halodurans (strain ATCC BAA-125 / DSM 18197 / FERM 7344 / JCM 9153 / C-125) (Bacillus halodurans).